The sequence spans 228 residues: Orotidine 5'-phosphate decarboxylase (228 aa).

Substrate-binding positions include Asp-20, Lys-42, 70 to 79 (DFKVADIPET), Ser-127, 180 to 190 (PGVGAQGGDPG), Gly-202, and Arg-203. Residue Lys-72 is the Proton donor of the active site.

Belongs to the OMP decarboxylase family. Type 1 subfamily. In terms of assembly, homodimer.

The catalysed reaction is orotidine 5'-phosphate + H(+) = UMP + CO2. Its pathway is pyrimidine metabolism; UMP biosynthesis via de novo pathway; UMP from orotate: step 2/2. In terms of biological role, catalyzes the decarboxylation of orotidine 5'-monophosphate (OMP) to uridine 5'-monophosphate (UMP). This chain is Orotidine 5'-phosphate decarboxylase (pyrF), found in Methanothermobacter thermautotrophicus (strain ATCC 29096 / DSM 1053 / JCM 10044 / NBRC 100330 / Delta H) (Methanobacterium thermoautotrophicum).